A 311-amino-acid chain; its full sequence is Probable inactive peptidyl-prolyl cis-trans isomerase-like 6 (311 aa).

A PPIase cyclophilin-type domain is found at 145 to 308 (FLDICIDSSP…HMCRITDSGD (164 aa)).

Belongs to the cyclophilin-type PPIase family.

Probable inactive PPIase with no peptidyl-prolyl cis-trans isomerase activity. In Homo sapiens (Human), this protein is Probable inactive peptidyl-prolyl cis-trans isomerase-like 6.